A 167-amino-acid chain; its full sequence is Ribosome maturation factor RimM (167 aa).

Positions 92–166 (DGVYYYRELL…EVRVELMEGL (75 aa)) constitute a PRC barrel domain.

Belongs to the RimM family. Binds ribosomal protein uS19.

Its subcellular location is the cytoplasm. Functionally, an accessory protein needed during the final step in the assembly of 30S ribosomal subunit, possibly for assembly of the head region. Essential for efficient processing of 16S rRNA. May be needed both before and after RbfA during the maturation of 16S rRNA. It has affinity for free ribosomal 30S subunits but not for 70S ribosomes. The polypeptide is Ribosome maturation factor RimM (Lactobacillus delbrueckii subsp. bulgaricus (strain ATCC 11842 / DSM 20081 / BCRC 10696 / JCM 1002 / NBRC 13953 / NCIMB 11778 / NCTC 12712 / WDCM 00102 / Lb 14)).